The chain runs to 332 residues: 3-dehydroquinate synthase (332 aa).

NAD(+) contacts are provided by residues 55-60, 89-93, 113-114, Lys126, Lys134, and 152-155; these read DGEEYK, GVITD, TT, and TLST. Residues Glu167, His226, and His242 each coordinate Zn(2+).

It belongs to the sugar phosphate cyclases superfamily. Dehydroquinate synthase family. Requires NAD(+) as cofactor. Co(2+) is required as a cofactor. The cofactor is Zn(2+).

The protein localises to the cytoplasm. It catalyses the reaction 7-phospho-2-dehydro-3-deoxy-D-arabino-heptonate = 3-dehydroquinate + phosphate. Its pathway is metabolic intermediate biosynthesis; chorismate biosynthesis; chorismate from D-erythrose 4-phosphate and phosphoenolpyruvate: step 2/7. Functionally, catalyzes the conversion of 3-deoxy-D-arabino-heptulosonate 7-phosphate (DAHP) to dehydroquinate (DHQ). This is 3-dehydroquinate synthase from Pyrococcus abyssi (strain GE5 / Orsay).